The following is a 678-amino-acid chain: Photosystem I P700 chlorophyll a apoprotein A1 (678 aa).

Helical transmembrane passes span 75-98 (VFAANLAHIGVAFIWLSGMHFHGA), 152-175 (LKVIAAFGLIASALCFLGSYFHMH), 192-216 (STHHLVGLLGLGSLAWAGHLIHISL), 266-284 (SAMHHFALALVLIVGSVLG), 302-325 (WHLVLGVQLFVTGTASVLYAQMSN), 341-367 (VSLFVHHMWIGGFFLVGAFAHLSIGLV), 384-406 (IILGHLTWVVAFLGVHSFGLYVH), and 458-476 (FMVTHIHAFTIHTTVLILV). [4Fe-4S] cluster-binding residues include Cys-500 and Cys-509. 2 consecutive transmembrane segments (helical) span residues 516 to 537 (HVFLGLFWMYNSISVVIFHFFW) and 591 to 613 (LAAYGLTFPASHFVWALSLMFLF). Position 602 (His-602) interacts with chlorophyll a'. Residues Met-610 and Tyr-618 each coordinate chlorophyll a. Trp-619 contacts phylloquinone. A helical membrane pass occupies residues 651-671 (AVGFTHYLLGGIGSTWSFFLA).

Belongs to the PsaA/PsaB family. The PsaA/B heterodimer binds the P700 chlorophyll special pair and subsequent electron acceptors. PSI consists of a core antenna complex that captures photons, and an electron transfer chain that converts photonic excitation into a charge separation. The eukaryotic PSI reaction center is composed of at least 11 subunits. It depends on P700 is a chlorophyll a/chlorophyll a' dimer, A0 is one or more chlorophyll a, A1 is one or both phylloquinones and FX is a shared 4Fe-4S iron-sulfur center. as a cofactor.

It is found in the plastid. The protein resides in the chloroplast thylakoid membrane. The catalysed reaction is reduced [plastocyanin] + hnu + oxidized [2Fe-2S]-[ferredoxin] = oxidized [plastocyanin] + reduced [2Fe-2S]-[ferredoxin]. Functionally, psaA and PsaB bind P700, the primary electron donor of photosystem I (PSI), as well as the electron acceptors A0, A1 and FX. PSI is a plastocyanin/cytochrome c6-ferredoxin oxidoreductase, converting photonic excitation into a charge separation, which transfers an electron from the donor P700 chlorophyll pair to the spectroscopically characterized acceptors A0, A1, FX, FA and FB in turn. Oxidized P700 is reduced on the lumenal side of the thylakoid membrane by plastocyanin or cytochrome c6. The protein is Photosystem I P700 chlorophyll a apoprotein A1 of Amphidinium carterae (Dinoflagellate).